Here is a 240-residue protein sequence, read N- to C-terminus: Ubiquinone biosynthesis O-methyltransferase (240 aa).

4 residues coordinate S-adenosyl-L-methionine: arginine 44, glycine 64, aspartate 85, and methionine 129.

The protein belongs to the methyltransferase superfamily. UbiG/COQ3 family.

It catalyses the reaction a 3-demethylubiquinol + S-adenosyl-L-methionine = a ubiquinol + S-adenosyl-L-homocysteine + H(+). The catalysed reaction is a 3-(all-trans-polyprenyl)benzene-1,2-diol + S-adenosyl-L-methionine = a 2-methoxy-6-(all-trans-polyprenyl)phenol + S-adenosyl-L-homocysteine + H(+). Its pathway is cofactor biosynthesis; ubiquinone biosynthesis. O-methyltransferase that catalyzes the 2 O-methylation steps in the ubiquinone biosynthetic pathway. The protein is Ubiquinone biosynthesis O-methyltransferase of Escherichia coli (strain UTI89 / UPEC).